The primary structure comprises 61 residues: Three-finger hemachatoxin (61 aa).

4 disulfide bridges follow: C3–C22, C15–C39, C43–C54, and C55–C60.

It belongs to the three-finger toxin family. Short-chain subfamily. Type IB cytotoxin sub-subfamily. In terms of tissue distribution, expressed by the venom gland.

The protein resides in the secreted. Its function is as follows. This protein lyses red blood cells and has cardiotoxic and hypotensive activities. The protein is Three-finger hemachatoxin of Hemachatus haemachatus (Rinkhals).